Consider the following 252-residue polypeptide: Protein HEAT-INDUCED TAS1 TARGET 2 (252 aa).

The protein belongs to the heat induced plant HTT protein family. In terms of tissue distribution, expressed ubiquitously, including in seedlings, leaves, stems, inflorescences and siliques.

It localises to the cytoplasm. The protein localises to the nucleus. Mediates both basal and acquired thermotolerance via HSFA1s-directed pathways (e.g. HSFA1A, HSFA1B, and HSFA1D). Triggers the expression of HSFA1A and HSFA1B. The protein is Protein HEAT-INDUCED TAS1 TARGET 2 of Arabidopsis thaliana (Mouse-ear cress).